A 301-amino-acid chain; its full sequence is Ribosomal RNA small subunit methyltransferase H (301 aa).

S-adenosyl-L-methionine-binding positions include 31–33 (GGY), aspartate 49, phenylalanine 76, aspartate 97, and glutamine 104.

The protein belongs to the methyltransferase superfamily. RsmH family.

It localises to the cytoplasm. It carries out the reaction cytidine(1402) in 16S rRNA + S-adenosyl-L-methionine = N(4)-methylcytidine(1402) in 16S rRNA + S-adenosyl-L-homocysteine + H(+). Its function is as follows. Specifically methylates the N4 position of cytidine in position 1402 (C1402) of 16S rRNA. This Ehrlichia ruminantium (strain Welgevonden) protein is Ribosomal RNA small subunit methyltransferase H.